The chain runs to 299 residues: Tyrosine recombinase XerC (299 aa).

The Core-binding (CB) domain occupies 1 to 85 (MDQHLDAYCM…AVRGFYKYLN (85 aa)). Residues 106–285 (RLPKTLDTDR…DFQHLATVYD (180 aa)) form the Tyr recombinase domain. Active-site residues include arginine 146, lysine 170, histidine 237, arginine 240, and histidine 263. The active-site O-(3'-phospho-DNA)-tyrosine intermediate is the tyrosine 272.

The protein belongs to the 'phage' integrase family. XerC subfamily. As to quaternary structure, forms a cyclic heterotetrameric complex composed of two molecules of XerC and two molecules of XerD.

Its subcellular location is the cytoplasm. In terms of biological role, site-specific tyrosine recombinase, which acts by catalyzing the cutting and rejoining of the recombining DNA molecules. The XerC-XerD complex is essential to convert dimers of the bacterial chromosome into monomers to permit their segregation at cell division. It also contributes to the segregational stability of plasmids. The sequence is that of Tyrosine recombinase XerC from Pseudomonas syringae pv. syringae (strain B728a).